The following is a 179-amino-acid chain: Large ribosomal subunit protein uL5 (179 aa).

Belongs to the universal ribosomal protein uL5 family. As to quaternary structure, part of the 50S ribosomal subunit; part of the 5S rRNA/L5/L18/L25 subcomplex. Contacts the 5S rRNA and the P site tRNA. Forms a bridge to the 30S subunit in the 70S ribosome.

Functionally, this is one of the proteins that bind and probably mediate the attachment of the 5S RNA into the large ribosomal subunit, where it forms part of the central protuberance. In the 70S ribosome it contacts protein S13 of the 30S subunit (bridge B1b), connecting the 2 subunits; this bridge is implicated in subunit movement. Contacts the P site tRNA; the 5S rRNA and some of its associated proteins might help stabilize positioning of ribosome-bound tRNAs. This Janthinobacterium sp. (strain Marseille) (Minibacterium massiliensis) protein is Large ribosomal subunit protein uL5.